The chain runs to 345 residues: Phosphate acyltransferase (345 aa).

The protein belongs to the PlsX family. Homodimer. Probably interacts with PlsY.

It localises to the cytoplasm. The catalysed reaction is a fatty acyl-[ACP] + phosphate = an acyl phosphate + holo-[ACP]. The protein operates within lipid metabolism; phospholipid metabolism. Catalyzes the reversible formation of acyl-phosphate (acyl-PO(4)) from acyl-[acyl-carrier-protein] (acyl-ACP). This enzyme utilizes acyl-ACP as fatty acyl donor, but not acyl-CoA. This chain is Phosphate acyltransferase, found in Trichlorobacter lovleyi (strain ATCC BAA-1151 / DSM 17278 / SZ) (Geobacter lovleyi).